A 129-amino-acid polypeptide reads, in one-letter code: Small ribosomal subunit protein uS11 (129 aa).

Belongs to the universal ribosomal protein uS11 family. As to quaternary structure, part of the 30S ribosomal subunit. Interacts with proteins S7 and S18. Binds to IF-3.

Its function is as follows. Located on the platform of the 30S subunit, it bridges several disparate RNA helices of the 16S rRNA. Forms part of the Shine-Dalgarno cleft in the 70S ribosome. The chain is Small ribosomal subunit protein uS11 from Allorhizobium ampelinum (strain ATCC BAA-846 / DSM 112012 / S4) (Agrobacterium vitis (strain S4)).